Reading from the N-terminus, the 677-residue chain is mRNA 3'-end-processing protein RNA14 (677 aa).

HAT repeat units lie at residues 56-88, 90-124, 138-170, 181-214, 257-289, and 298-330; these read ESYAKVREVYEQFHNTFPFYSPAWTLQLKGELA, DEFETVEKILAQCLSGKLENNDLSLWSTYLDYIRR, VIVKAFQLVMQKCAIFEPKSSSFWNEYLNFLEQ, QRIDMLREFYKKMLCVPFDNLEKMWNRYTQWEQE, RTANKKNIPQPGTSDSNIQQLQIWLNWIKWERE, and MLSQRISYVYKQGIQYMIFSAEMWYDYSMYISE.

In terms of assembly, component of the CFIA complex, which is composed of RNA14, RNA15, PCF11 and CLP1. Interacts with FIP1, PFS2, YSH1 and probably also with RNA15. Probably interacts with the phosphorylated CTD domain of RPB1/RNA polymerase II.

It localises to the nucleus. The protein resides in the cytoplasm. Its function is as follows. Component of the cleavage factor IA (CFIA) complex, which is involved in the endonucleolytic cleavage during polyadenylation-dependent pre-mRNA 3'-end formation and cooperates with the cleavage factor NAB4/CFIB and the cleavage and polyadenylation factor (CPF) complex. This chain is mRNA 3'-end-processing protein RNA14 (RNA14), found in Saccharomyces cerevisiae (strain ATCC 204508 / S288c) (Baker's yeast).